Consider the following 415-residue polypeptide: Squalene synthase 1 (415 aa).

Helical transmembrane passes span 281 to 301 (AIFRFCAIPQIMAIGTLALCF) and 391 to 411 (LIAIIFIILAILYAYLSSNLL).

Belongs to the phytoene/squalene synthase family. Requires Mg(2+) as cofactor. The cofactor is Mn(2+). As to expression, mostly expressed in the shoot apex (buds) and roots, and, to a lower extent, in stems, leaves, flowers and seeds.

It localises to the endoplasmic reticulum membrane. It carries out the reaction 2 (2E,6E)-farnesyl diphosphate + NADH + H(+) = squalene + 2 diphosphate + NAD(+). It catalyses the reaction 2 (2E,6E)-farnesyl diphosphate + NADPH + H(+) = squalene + 2 diphosphate + NADP(+). Its pathway is terpene metabolism; lanosterol biosynthesis; lanosterol from farnesyl diphosphate: step 1/3. In terms of biological role, component of the triterpene saponins (e.g. ginsenosides or panaxosides) and phytosterols biosynthetic pathways. Catalyzes the biosynthesis of squalene. This Panax ginseng (Korean ginseng) protein is Squalene synthase 1.